The chain runs to 1058 residues: Isoleucine--tRNA ligase (1058 aa).

The 'HIGH' region signature appears at 48-58; it reads PYTTGHIHLGT. The 'KMSKS' region motif lies at 596–600; sequence KMSKS. Position 599 (K599) interacts with ATP.

It belongs to the class-I aminoacyl-tRNA synthetase family. IleS type 2 subfamily. As to quaternary structure, monomer. Requires Zn(2+) as cofactor.

It is found in the cytoplasm. The catalysed reaction is tRNA(Ile) + L-isoleucine + ATP = L-isoleucyl-tRNA(Ile) + AMP + diphosphate. Its function is as follows. Catalyzes the attachment of isoleucine to tRNA(Ile). As IleRS can inadvertently accommodate and process structurally similar amino acids such as valine, to avoid such errors it has two additional distinct tRNA(Ile)-dependent editing activities. One activity is designated as 'pretransfer' editing and involves the hydrolysis of activated Val-AMP. The other activity is designated 'posttransfer' editing and involves deacylation of mischarged Val-tRNA(Ile). In Methanosarcina acetivorans (strain ATCC 35395 / DSM 2834 / JCM 12185 / C2A), this protein is Isoleucine--tRNA ligase.